The chain runs to 1844 residues: ATPase family AAA domain-containing protein 5 (1844 aa).

The residue at position 44 (serine 44) is a Phosphoserine. A Glycyl lysine isopeptide (Lys-Gly) (interchain with G-Cter in SUMO2) cross-link involves residue lysine 127. A compositionally biased stretch (polar residues) spans 178 to 199; the sequence is QPNTMTSLQNSKKVNPKQGTTK. Positions 178–204 are disordered; that stretch reads QPNTMTSLQNSKKVNPKQGTTKNDFKK. Residues serine 219, serine 306, serine 311, serine 354, and serine 369 each carry the phosphoserine modification. An interaction with WDR48 region spans residues 368 to 384; it reads KSNVVIQEEELELAVLE. Disordered regions lie at residues 477-499, 580-623, and 658-700; these read KLKKKNKKTLDTGAIPGKNREGN, ESEA…NSQL, and KFTR…SKNI. 2 stretches are compositionally biased toward polar residues: residues 580–592 and 599–608; these read ESEASLLNVSTPK and RISSTPTTET. A phosphoserine mark is found at serine 602, serine 614, and serine 621. The segment covering 664 to 673 has biased composition (basic residues); that stretch reads TPKKSKKKSN. Positions 685 to 700 are enriched in polar residues; sequence GFTSQIRKASNTSKNI. The residue at position 817 (serine 817) is a Phosphoserine. Basic and acidic residues-rich tracts occupy residues 987 to 1032 and 1092 to 1106; these read LEAD…ELSK and RQNLKGKRDEKHEDF. 2 disordered regions span residues 987 to 1047 and 1092 to 1118; these read LEAD…SKDS and RQNLKGKRDEKHEDFSGGIDFKGSSDD. Serine 1116 is subject to Phosphoserine. 1132-1139 serves as a coordination point for ATP; it reads GPTGVGKT. Disordered regions lie at residues 1203 to 1235 and 1272 to 1292; these read KKISSPKKVVTSPRKVPPPSPKSSGPKRALPPK and ITQTKSTNATNSNVKDVGAEE. Residues 1272-1285 are compositionally biased toward polar residues; that stretch reads ITQTKSTNATNSNV. Positions 1428 to 1432 match the LXCXE motif motif; the sequence is LVCSE. The segment at 1591-1635 is disordered; sequence SLSSVSSSSNAEESKTGDEESKARDKGNNPETKKSIPCPPKTTAG. The segment covering 1602 to 1624 has biased composition (basic and acidic residues); that stretch reads EESKTGDEESKARDKGNNPETKK. The interaction with RAD51 and RFC5 stretch occupies residues 1630–1719; that stretch reads PKTTAGKKCS…AAAEALSFTK (90 aa).

The protein belongs to the AAA ATPase family. In terms of assembly, component of a heteropentameric replication factor ATAD5 RFC-like complex composed of one large subunit (ATAD5) and four small subunits (RFC2, RFC3, RFC4 and RFC5). Within the ATAD5 RFC-like complex, interacts with RFC2, RFC4 and RFC5. Within the ATAD5 RFC-like complex, interacts directly via-N terminal with RAD51; the interactions is enhanced under replication stress. Interacts with RB1 predominantly in G1 phase via its LXCXE motif. Interacts with RAD9A in growing cells. The interaction with RAD9A is reduced after exposure to DNA replication-inhibiting agents. Interacts with BRD4. Interacts with PCNA. Interacts with deubiquitinating enzyme USP1, and its associated factor, WDR48. Post-translationally, ATR may stimulate the RAD9A dissociation.

It is found in the nucleus. Functionally, has an important role in DNA replication and in maintaining genome integrity during replication stress. Involved in a RAD9A-related damage checkpoint, a pathway that is important in determining whether DNA damage is compatible with cell survival or whether it requires cell elimination by apoptosis. Modulates the RAD9A interaction with BCL2 and thereby induces DNA damage-induced apoptosis. Promotes PCNA deubiquitination by recruiting the ubiquitin-specific protease 1 (USP1) and WDR48 thereby down-regulating the error-prone damage bypass pathway. As component of the ATAD5 RFC-like complex, regulates the function of the DNA polymerase processivity factor PCNA by unloading the ring-shaped PCNA homotrimer from DNA after replication during the S phase of the cell cycle. This seems to be dependent on its ATPase activity. Plays important roles in restarting stalled replication forks under replication stress, by unloading the PCNA homotrimer from DNA and recruiting RAD51 possibly through an ATR-dependent manner. Ultimately this enables replication fork regression, breakage, and eventual fork restart. Both the PCNA unloading activity and the interaction with WDR48 are required to efficiently recruit RAD51 to stalled replication forks. Promotes the generation of MUS81-mediated single-stranded DNA-associated breaks in response to replication stress, which is an alternative pathway to restart stalled/regressed replication forks. In Homo sapiens (Human), this protein is ATPase family AAA domain-containing protein 5.